A 357-amino-acid chain; its full sequence is Histidinol-phosphate aminotransferase 1 (357 aa).

An N6-(pyridoxal phosphate)lysine modification is found at Lys-210.

This sequence belongs to the class-II pyridoxal-phosphate-dependent aminotransferase family. Histidinol-phosphate aminotransferase subfamily. As to quaternary structure, homodimer. Pyridoxal 5'-phosphate serves as cofactor.

The enzyme catalyses L-histidinol phosphate + 2-oxoglutarate = 3-(imidazol-4-yl)-2-oxopropyl phosphate + L-glutamate. It functions in the pathway amino-acid biosynthesis; L-histidine biosynthesis; L-histidine from 5-phospho-alpha-D-ribose 1-diphosphate: step 7/9. This is Histidinol-phosphate aminotransferase 1 from Methylococcus capsulatus (strain ATCC 33009 / NCIMB 11132 / Bath).